A 394-amino-acid chain; its full sequence is Carbamoyl phosphate synthase small chain (394 aa).

The CPSase stretch occupies residues 1–188 (MIRKERAILA…ALPYAFPTLR (188 aa)). L-glutamine-binding residues include Ser49, Gly240, and Gly242. Residues 192–379 (RVVLMDFGIK…IEEIDAFDGG (188 aa)) form the Glutamine amidotransferase type-1 domain. Cys267 functions as the Nucleophile in the catalytic mechanism. L-glutamine is bound by residues Leu268, Gln271, Asn309, Gly311, and Tyr312. Active-site residues include His352 and Glu354.

The protein belongs to the CarA family. In terms of assembly, composed of two chains; the small (or glutamine) chain promotes the hydrolysis of glutamine to ammonia, which is used by the large (or ammonia) chain to synthesize carbamoyl phosphate. Tetramer of heterodimers (alpha,beta)4.

The enzyme catalyses hydrogencarbonate + L-glutamine + 2 ATP + H2O = carbamoyl phosphate + L-glutamate + 2 ADP + phosphate + 2 H(+). The catalysed reaction is L-glutamine + H2O = L-glutamate + NH4(+). Its pathway is amino-acid biosynthesis; L-arginine biosynthesis; carbamoyl phosphate from bicarbonate: step 1/1. The protein operates within pyrimidine metabolism; UMP biosynthesis via de novo pathway; (S)-dihydroorotate from bicarbonate: step 1/3. Its function is as follows. Small subunit of the glutamine-dependent carbamoyl phosphate synthetase (CPSase). CPSase catalyzes the formation of carbamoyl phosphate from the ammonia moiety of glutamine, carbonate, and phosphate donated by ATP, constituting the first step of 2 biosynthetic pathways, one leading to arginine and/or urea and the other to pyrimidine nucleotides. The small subunit (glutamine amidotransferase) binds and cleaves glutamine to supply the large subunit with the substrate ammonia. The chain is Carbamoyl phosphate synthase small chain from Deinococcus radiodurans (strain ATCC 13939 / DSM 20539 / JCM 16871 / CCUG 27074 / LMG 4051 / NBRC 15346 / NCIMB 9279 / VKM B-1422 / R1).